The sequence spans 447 residues: Exodeoxyribonuclease 7 large subunit (447 aa).

Belongs to the XseA family. In terms of assembly, heterooligomer composed of large and small subunits.

Its subcellular location is the cytoplasm. The enzyme catalyses Exonucleolytic cleavage in either 5'- to 3'- or 3'- to 5'-direction to yield nucleoside 5'-phosphates.. Bidirectionally degrades single-stranded DNA into large acid-insoluble oligonucleotides, which are then degraded further into small acid-soluble oligonucleotides. The polypeptide is Exodeoxyribonuclease 7 large subunit (Exiguobacterium sibiricum (strain DSM 17290 / CCUG 55495 / CIP 109462 / JCM 13490 / 255-15)).